We begin with the raw amino-acid sequence, 348 residues long: Selenide, water dikinase (348 aa).

Residue Cys-17 is part of the active site. Residues Lys-20 and 48 to 50 (TSD) each bind ATP. Asp-51 contributes to the Mg(2+) binding site. ATP-binding positions include Asp-68, Asp-91, and 139–141 (GHT). Asp-91 is a binding site for Mg(2+). Asp-227 contacts Mg(2+).

This sequence belongs to the selenophosphate synthase 1 family. Class I subfamily. Homodimer. The cofactor is Mg(2+).

It catalyses the reaction hydrogenselenide + ATP + H2O = selenophosphate + AMP + phosphate + 2 H(+). In terms of biological role, synthesizes selenophosphate from selenide and ATP. The sequence is that of Selenide, water dikinase from Dechloromonas aromatica (strain RCB).